The chain runs to 694 residues: Putative serine/threonine-protein kinase R679 (694 aa).

In terms of domain architecture, Protein kinase spans 167 to 548 (ITKNKTVGKG…ITNILKHLFT (382 aa)). ATP contacts are provided by residues 173 to 181 (VGKGAAGIA) and Lys196. The Proton acceptor role is filled by Asp395.

It belongs to the protein kinase superfamily. Ser/Thr protein kinase family.

The protein localises to the virion. The enzyme catalyses L-seryl-[protein] + ATP = O-phospho-L-seryl-[protein] + ADP + H(+). It carries out the reaction L-threonyl-[protein] + ATP = O-phospho-L-threonyl-[protein] + ADP + H(+). The chain is Putative serine/threonine-protein kinase R679 from Acanthamoeba polyphaga (Amoeba).